Reading from the N-terminus, the 1220-residue chain is Plasma membrane calcium-transporting ATPase 1 (1220 aa).

G2 is subject to N-acetylglycine. Over 2–105 the chain is Cytoplasmic; the sequence is GDMANNSVAY…KTFLQLVWEA (104 aa). S8 and S17 each carry phosphoserine. A helical transmembrane segment spans residues 106 to 126; sequence LQDVTLIILEIAAIVSLGLSF. Residues 127-154 lie on the Extracellular side of the membrane; sequence YQPPEGDNALCGEVSVGEEEGEGETGWI. A helical transmembrane segment spans residues 155–175; that stretch reads EGAAILLSVVCVVLVTAFNDW. The Cytoplasmic segment spans residues 176–366; that stretch reads SKEKQFRGLQ…KEKSVLQGKL (191 aa). The disordered stretch occupies residues 297 to 356; that stretch reads EEEKKDEKKKEKKNKKQDGAIENRNKAKAQDGAAMEMQPLKSEEGGDGDEKDKKKANLPK. Basic and acidic residues-rich tracts occupy residues 312 to 325 and 337 to 356; these read KQDGAIENRNKAKA and KSEEGGDGDEKDKKKANLPK. S338 is modified (phosphoserine). Residues 367 to 386 traverse the membrane as a helical segment; the sequence is TKLAVQIGKAGLLMSAITVI. Over 387–418 the chain is Extracellular; sequence ILVLYFVIDTFWVQKRPWLAECTPIYIQYFVK. Residues 419–439 form a helical membrane-spanning segment; that stretch reads FFIIGVTVLVVAVPEGLPLAV. Topologically, residues 440 to 855 are cytoplasmic; that stretch reads TISLAYSVKK…RNVYDSISKF (416 aa). The 4-aspartylphosphate intermediate role is filled by D475. Residues D475, T477, D797, and D801 each contribute to the Mg(2+) site. Residues 856 to 876 form a helical membrane-spanning segment; the sequence is LQFQLTVNVVAVIVAFTGACI. Residues 877–882 are Extracellular-facing; it reads TQDSPL. The helical transmembrane segment at 883-903 threads the bilayer; sequence KAVQMLWVNLIMDTLASLALA. Topologically, residues 904–927 are cytoplasmic; it reads TEPPTESLLLRKPYGRNKPLISRT. Residues 928-948 form a helical membrane-spanning segment; that stretch reads MMKNILGHAFYQLVVVFTLLF. At 949–971 the chain is on the extracellular side; it reads AGEKFFDIDSGRNAPLHAPPSEH. Residues 972–991 traverse the membrane as a helical segment; that stretch reads YTIVFNTFVLMQLFNEINAR. At 992 to 1005 the chain is on the cytoplasmic side; sequence KIHGERNVFEGIFN. The helical transmembrane segment at 1006-1027 threads the bilayer; the sequence is NAIFCTIVLGTFVVQIIIVQFG. Residues 1028–1039 lie on the Extracellular side of the membrane; sequence GKPFSCSELSIE. The chain crosses the membrane as a helical span at residues 1040–1060; that stretch reads QWLWSIFLGMGTLLWGQLIST. The Cytoplasmic segment spans residues 1061–1220; it reads IPTSRLKFLK…SPLHSLETSL (160 aa). The calmodulin-binding subdomain A stretch occupies residues 1100 to 1117; sequence LRRGQILWFRGLNRIQTQ. T1116 is subject to Phosphothreonine; by PKC. The interval 1118–1127 is calmodulin-binding subdomain B; that stretch reads IRVVNAFRSS. The segment at 1118-1220 is required for basolateral membrane targeting; sequence IRVVNAFRSS…SPLHSLETSL (103 aa). Residues S1140 and S1155 each carry the phosphoserine modification. The tract at residues 1160–1220 is disordered; sequence PLIDDTDAED…SPLHSLETSL (61 aa). Position 1165 is a phosphothreonine (T1165). Residues S1178 and S1182 each carry the phosphoserine modification. A compositionally biased stretch (polar residues) spans 1200-1220; sequence MNKSATSSSPGSPLHSLETSL.

It belongs to the cation transport ATPase (P-type) (TC 3.A.3) family. Type IIB subfamily. Monomer. Dimer. Oligomer. Calmodulin binding. Interacts with PDZD11. Interacts with SLC35G1 and STIM1. Interacts with YWHAE; interacts with the monomeric and dimeric forms of the YWHAE but prefer the monomer form; this interaction inhibits calcium-transporting ATPase activity. Interacts with NPTN; this interaction stabilizes ATP2B1 and increases ATPase activity; this interaction controls T cell calcium homeostasis following T cell activation. Interacts with EPB41; regulates small intestinal calcium absorption through regulation of membrane expression of ATP2B1.

The protein localises to the cell membrane. It is found in the basolateral cell membrane. It localises to the synapse. The protein resides in the presynaptic cell membrane. Its subcellular location is the cytoplasmic vesicle. The protein localises to the secretory vesicle. It is found in the synaptic vesicle membrane. The enzyme catalyses Ca(2+)(in) + ATP + H2O = Ca(2+)(out) + ADP + phosphate + H(+). Functionally, catalyzes the hydrolysis of ATP coupled with the transport of calcium from the cytoplasm to the extracellular space thereby maintaining intracellular calcium homeostasis. Plays a role in blood pressure regulation through regulation of intracellular calcium concentration and nitric oxide production leading to regulation of vascular smooth muscle cells vasoconstriction. Positively regulates bone mineralization through absorption of calcium from the intestine. Plays dual roles in osteoclast differentiation and survival by regulating RANKL-induced calcium oscillations in preosteoclasts and mediating calcium extrusion in mature osteoclasts. Regulates insulin sensitivity through calcium/calmodulin signaling pathway by regulating AKT1 activation and NOS3 activation in endothelial cells. May play a role in synaptic transmission by modulating calcium and proton dynamics at the synaptic vesicles. In Sus scrofa (Pig), this protein is Plasma membrane calcium-transporting ATPase 1.